Here is a 309-residue protein sequence, read N- to C-terminus: Tagatose-6-phosphate kinase (309 aa).

This sequence belongs to the carbohydrate kinase PfkB family. LacC subfamily.

The catalysed reaction is D-tagatofuranose 6-phosphate + ATP = D-tagatofuranose 1,6-bisphosphate + ADP + H(+). It functions in the pathway carbohydrate metabolism; D-tagatose 6-phosphate degradation; D-glyceraldehyde 3-phosphate and glycerone phosphate from D-tagatose 6-phosphate: step 1/2. This is Tagatose-6-phosphate kinase from Streptococcus sanguinis (strain SK36).